The primary structure comprises 223 residues: RNA-free ribonuclease P (223 aa).

Belongs to the HARP family.

It catalyses the reaction Endonucleolytic cleavage of RNA, removing 5'-extranucleotides from tRNA precursor.. Functionally, RNA-free RNase P that catalyzes the removal of the 5'-leader sequence from pre-tRNA to produce the mature 5'-terminus. This Methanococcus vannielii (strain ATCC 35089 / DSM 1224 / JCM 13029 / OCM 148 / SB) protein is RNA-free ribonuclease P.